A 786-amino-acid chain; its full sequence is Probable glutamine--tRNA ligase (786 aa).

The segment covering D181–K198 has biased composition (basic and acidic residues). The disordered stretch occupies residues D181–E218. The 'HIGH' region motif lies at P276–H286. ATP is bound by residues E277 to N279 and H283 to A289. L-glutamine contacts are provided by D309 and Y444. ATP-binding positions include T463, R492 to L493, and V500 to K502. The 'KMSKS' region motif lies at V499–R503.

It belongs to the class-I aminoacyl-tRNA synthetase family.

The enzyme catalyses tRNA(Gln) + L-glutamine + ATP = L-glutaminyl-tRNA(Gln) + AMP + diphosphate. This Caenorhabditis elegans protein is Probable glutamine--tRNA ligase.